The following is a 187-amino-acid chain: Ubiquinone biosynthesis protein COQ4 homolog, mitochondrial (187 aa).

Residues histidine 77, aspartate 78, histidine 81, and glutamate 93 each coordinate Zn(2+).

Belongs to the COQ4 family. As to quaternary structure, component of a multi-subunit COQ enzyme complex. Zn(2+) serves as cofactor.

The protein localises to the mitochondrion inner membrane. It catalyses the reaction a 4-hydroxy-3-methoxy-5-(all-trans-polyprenyl)benzoate + H(+) = a 2-methoxy-6-(all-trans-polyprenyl)phenol + CO2. Its pathway is cofactor biosynthesis; ubiquinone biosynthesis. Functionally, lyase that catalyzes the C1-decarboxylation of 4-hydroxy-3-methoxy-5-(all-trans-polyprenyl)benzoic acid into 2-methoxy-6-(all-trans-polyprenyl)phenol during ubiquinone biosynthesis. The protein is Ubiquinone biosynthesis protein COQ4 homolog, mitochondrial of Leishmania braziliensis.